A 234-amino-acid chain; its full sequence is Orotidine 5'-phosphate decarboxylase (234 aa).

Residues Asp-17, Lys-38, 65 to 74 (DLKLHDIPNT), Thr-122, Arg-184, Gln-193, Gly-213, and Arg-214 contribute to the substrate site. Lys-67 (proton donor) is an active-site residue.

It belongs to the OMP decarboxylase family. Type 1 subfamily. As to quaternary structure, homodimer.

It catalyses the reaction orotidine 5'-phosphate + H(+) = UMP + CO2. It participates in pyrimidine metabolism; UMP biosynthesis via de novo pathway; UMP from orotate: step 2/2. Catalyzes the decarboxylation of orotidine 5'-monophosphate (OMP) to uridine 5'-monophosphate (UMP). This chain is Orotidine 5'-phosphate decarboxylase, found in Thermosynechococcus vestitus (strain NIES-2133 / IAM M-273 / BP-1).